The following is a 335-amino-acid chain: Dolichyl-diphosphooligosaccharide--protein glycosyltransferase subunit MAGT1 (335 aa).

The first 29 residues, 1–29 (MAARWRFWCVSVTMVVALLIVCDVPSASA), serve as a signal peptide directing secretion. At 30-184 (QRKKEMVLSE…DVNIRVIRPP (155 aa)) the chain is on the extracellular side. Positions 47–175 (WTNKRPVIRM…IARWIADRTD (129 aa)) constitute a Thioredoxin domain. A glycan (N-linked (GlcNAc...) asparagine) is linked at asparagine 71. A disulfide bridge connects residues cysteine 87 and cysteine 90. A helical transmembrane segment spans residues 185–205 (NYAGPLMLGLLLAVIGGLVYL). Residues 206-209 (RRSN) lie on the Cytoplasmic side of the membrane. The chain crosses the membrane as a helical span at residues 210–230 (MEFLFNKTGWAFAALCFVLAM). Residues 231–270 (TSGQMWNHIRGPPYAHKNPHTGHVNYIHGSSQAQFVAETH) are Extracellular-facing. Residues 271 to 291 (IVLLFNGGVTLGMVLLCEAAT) form a helical membrane-spanning segment. The Cytoplasmic portion of the chain corresponds to 292 to 300 (SDMDIGKRK). Residues 301–321 (IMCVAGIGLVVLFFSWMLSIF) form a helical membrane-spanning segment. Residues 322–335 (RSKYHGYPYSFLMS) lie on the Extracellular side of the membrane.

Belongs to the OST3/OST6 family. In terms of assembly, accessory component of the STT3B-containing form of the oligosaccharyltransferase (OST) complex. OST exists in two different complex forms which contain common core subunits RPN1, RPN2, OST48, OST4, DAD1 and TMEM258, either STT3A or STT3B as catalytic subunits, and form-specific accessory subunits. OST can form stable complexes with the Sec61 complex or with both the Sec61 and TRAP complexes. The association of TUSC3 or MAGT1 with the STT3B-containing complex seems to be mutually exclusvice. As to expression, ubiquitous. Expressed at very low levels in brain, lung and kidney.

Its subcellular location is the cell membrane. The protein localises to the endoplasmic reticulum. It is found in the endoplasmic reticulum membrane. Its pathway is protein modification; protein glycosylation. In terms of biological role, accessory component of the STT3B-containing form of the N-oligosaccharyl transferase (OST) complex which catalyzes the transfer of a high mannose oligosaccharide from a lipid-linked oligosaccharide donor to an asparagine residue within an Asn-X-Ser/Thr consensus motif in nascent polypeptide chains. Involved in N-glycosylation of STT3B-dependent substrates. Specifically required for the glycosylation of a subset of acceptor sites that are near cysteine residues; in this function seems to act redundantly with TUSC3. In its oxidized form proposed to form transient mixed disulfides with a glycoprotein substrate to facilitate access of STT3B to the unmodified acceptor site. Also has oxidoreductase-independent functions in the STT3B-containing OST complex possibly involving substrate recognition. Could indirectly play a role in Mg(2+) transport in epithelial cells. In Homo sapiens (Human), this protein is Dolichyl-diphosphooligosaccharide--protein glycosyltransferase subunit MAGT1.